We begin with the raw amino-acid sequence, 468 residues long: ATP synthase subunit beta (468 aa).

155 to 162 (GGAGVGKT) is a binding site for ATP.

It belongs to the ATPase alpha/beta chains family. As to quaternary structure, F-type ATPases have 2 components, CF(1) - the catalytic core - and CF(0) - the membrane proton channel. CF(1) has five subunits: alpha(3), beta(3), gamma(1), delta(1), epsilon(1). CF(0) has three main subunits: a(1), b(2) and c(9-12). The alpha and beta chains form an alternating ring which encloses part of the gamma chain. CF(1) is attached to CF(0) by a central stalk formed by the gamma and epsilon chains, while a peripheral stalk is formed by the delta and b chains.

It is found in the cell membrane. The enzyme catalyses ATP + H2O + 4 H(+)(in) = ADP + phosphate + 5 H(+)(out). Functionally, produces ATP from ADP in the presence of a proton gradient across the membrane. The catalytic sites are hosted primarily by the beta subunits. The chain is ATP synthase subunit beta from Bacillus cereus (strain ATCC 10987 / NRS 248).